Reading from the N-terminus, the 589-residue chain is Nicotinate phosphoribosyltransferase (589 aa).

Residues 1–30 are disordered; the sequence is MSQSNTPLKRKKTENGYSENGSTTGATSNQ. A compositionally biased stretch (polar residues) spans 15–30; it reads NGYSENGSTTGATSNQ. The nicotinate site is built by Y68 and T256. The residue at position 259 (H259) is a Phosphohistidine. R356 contacts nicotinate. T418 is a binding site for 5-phospho-alpha-D-ribose 1-diphosphate.

It belongs to the NAPRTase family. Mg(2+) serves as cofactor. Requires Mn(2+) as cofactor. Transiently phosphorylated on a His residue during the reaction cycle. Phosphorylation strongly increases the affinity for substrates and increases the rate of nicotinate D-ribonucleotide production. Dephosphorylation regenerates the low-affinity form of the enzyme, leading to product release.

It carries out the reaction nicotinate + 5-phospho-alpha-D-ribose 1-diphosphate + ATP + H2O = nicotinate beta-D-ribonucleotide + ADP + phosphate + diphosphate. The protein operates within cofactor biosynthesis; NAD(+) biosynthesis; nicotinate D-ribonucleotide from nicotinate: step 1/1. Its function is as follows. Catalyzes the first step in the biosynthesis of NAD from nicotinic acid, the ATP-dependent synthesis of beta-nicotinate D-ribonucleotide from nicotinate and 5-phospho-D-ribose 1-phosphate. Helps prevent cellular oxidative stress via its role in NAD biosynthesis. The polypeptide is Nicotinate phosphoribosyltransferase (naprt) (Dictyostelium discoideum (Social amoeba)).